The sequence spans 351 residues: Nicotinate-nucleotide--dimethylbenzimidazole phosphoribosyltransferase (351 aa).

Glutamate 318 (proton acceptor) is an active-site residue.

Belongs to the CobT family.

It carries out the reaction 5,6-dimethylbenzimidazole + nicotinate beta-D-ribonucleotide = alpha-ribazole 5'-phosphate + nicotinate + H(+). The protein operates within nucleoside biosynthesis; alpha-ribazole biosynthesis; alpha-ribazole from 5,6-dimethylbenzimidazole: step 1/2. In terms of biological role, catalyzes the synthesis of alpha-ribazole-5'-phosphate from nicotinate mononucleotide (NAMN) and 5,6-dimethylbenzimidazole (DMB). The protein is Nicotinate-nucleotide--dimethylbenzimidazole phosphoribosyltransferase of Shewanella frigidimarina (strain NCIMB 400).